The primary structure comprises 308 residues: Aspartate carbamoyltransferase catalytic subunit (308 aa).

Arginine 55 and threonine 56 together coordinate carbamoyl phosphate. L-aspartate is bound at residue lysine 83. Carbamoyl phosphate is bound by residues arginine 105, histidine 133, and glutamine 136. L-aspartate contacts are provided by arginine 166 and arginine 220. Carbamoyl phosphate contacts are provided by glycine 261 and proline 262.

It belongs to the aspartate/ornithine carbamoyltransferase superfamily. ATCase family. In terms of assembly, heterododecamer (2C3:3R2) of six catalytic PyrB chains organized as two trimers (C3), and six regulatory PyrI chains organized as three dimers (R2).

It catalyses the reaction carbamoyl phosphate + L-aspartate = N-carbamoyl-L-aspartate + phosphate + H(+). It functions in the pathway pyrimidine metabolism; UMP biosynthesis via de novo pathway; (S)-dihydroorotate from bicarbonate: step 2/3. Functionally, catalyzes the condensation of carbamoyl phosphate and aspartate to form carbamoyl aspartate and inorganic phosphate, the committed step in the de novo pyrimidine nucleotide biosynthesis pathway. The chain is Aspartate carbamoyltransferase catalytic subunit from Chlorobaculum parvum (strain DSM 263 / NCIMB 8327) (Chlorobium vibrioforme subsp. thiosulfatophilum).